The chain runs to 963 residues: Phosphoenolpyruvate carboxylase (963 aa).

The residue at position 11 (Ser11) is a Phosphoserine. Residues His172 and Lys600 contribute to the active site.

It belongs to the PEPCase type 1 family. Homotetramer. The cofactor is Mg(2+).

The protein resides in the cytoplasm. The enzyme catalyses oxaloacetate + phosphate = phosphoenolpyruvate + hydrogencarbonate. By light-reversible phosphorylation. Through the carboxylation of phosphoenolpyruvate (PEP) it forms oxaloacetate, a four-carbon dicarboxylic acid source for the tricarboxylic acid cycle. This Picea abies (Norway spruce) protein is Phosphoenolpyruvate carboxylase (PPC).